We begin with the raw amino-acid sequence, 628 residues long: Voltage-gated potassium channel KCNC4 (628 aa).

Disordered regions lie at residues 1 to 24 (MISS…SKTC) and 62 to 88 (LAWL…GSSG). Positions 1–28 (MISSVCVSSYRGRKSGNKPPSKTCLKEE) are inactivation gate. Topologically, residues 1–230 (MISSVCVSSY…EDPYSSRAAR (230 aa)) are cytoplasmic. Phosphoserine occurs at positions 8, 9, 15, and 21. Positions 77-88 (DGGGAGSSGSSG) are enriched in gly residues. 4 residues coordinate Zn(2+): H120, C126, C147, and C148. Residues 231-251 (VVAFASLFFILVSITTFCLET) traverse the membrane as a helical segment. Residues N260 and N269 are each glycosylated (N-linked (GlcNAc...) asparagine). Residues 282-302 (EPILTYIEGVCVMWFTLEFLV) traverse the membrane as a helical segment. Topologically, residues 303–316 (RIVCCPDTLDFVKN) are cytoplasmic. The chain crosses the membrane as a helical span at residues 317 to 337 (LLNIIDFVAILPFYLEVGLSG). A helical; Voltage-sensor membrane pass occupies residues 349 to 368 (FLRVVRFVRILRIFKLTRHF). Over 369–384 (VGLRVLGHTLRASTNE) the chain is Cytoplasmic. Residues 385–405 (FLLLIIFLALGVLIFATMIYY) traverse the membrane as a helical segment. K(+)-binding residues include T440, L441, G442, and Y443. A Selectivity filter motif is present at residues 440-445 (TLGYGD). Residues 456-476 (VGALCALAGVLTIAMPVPVIV) traverse the membrane as a helical segment. The Cytoplasmic segment spans residues 477–628 (NNFGMYYSLA…CVPVSHTCAL (152 aa)). Residues 493-584 (PKKRKKHVPR…RRALRRSGTR (92 aa)) are disordered. Basic and acidic residues predominate over residues 531–546 (AREEGVVERKRADSKQ).

Belongs to the potassium channel family. C (Shaw) (TC 1.A.1.2) subfamily. Kv3.4/KCNC4 sub-subfamily. In terms of assembly, homotetramer. Heterotetramer of potassium channel proteins. In terms of processing, phosphorylation of serine residues in the inactivation gate inhibits rapid channel closure.

It is found in the membrane. It catalyses the reaction K(+)(in) = K(+)(out). Voltage-gated potassium channel that opens in response to the voltage difference across the membrane, forming a potassium-selective channel through which potassium ions pass in accordance with their electrochemical gradient. The channel displays rapid activation and inactivation kinetics. This is Voltage-gated potassium channel KCNC4 from Mus musculus (Mouse).